Reading from the N-terminus, the 431-residue chain is DNA polymerase delta subunit 3 (431 aa).

The segment at 64 to 80 (QGSDSGEDLYSVVLESR) is necessary for function, possibly resulting from its inability to interact with PolD2. Residues 128–431 (PGAGKIVPSA…AGIMNFFSKK (304 aa)) are disordered. The span at 156-171 (SKSAVKLEPSKSSLKS) shows a compositional bias: low complexity. Basic and acidic residues-rich tracts occupy residues 172 to 200 (EPAK…EQAS) and 252 to 271 (SPPE…NKKE). The span at 278–290 (PSPTKKPTTANTS) shows a compositional bias: low complexity. The segment covering 294-307 (FDEESAESSDEEEK) has biased composition (acidic residues). Composition is skewed to basic and acidic residues over residues 308-328 (LDML…EKAS) and 343-362 (QPPK…KMDT). Residues 387-411 (PANKKVSPKAAAPVNKKKSPPSAAK) show a composition bias toward low complexity.

Component of both the DNA polymerase delta and DNA polymerase zeta complexes. The DNA polymerase delta complex consists of three subunits: the catalytic subunit PolD1 and two accessory subunits PolD2/Pol31 and PolD3/Pol32. Within the delta complex, interacts with both PolD1 and PolD2. Component of the DNA polymerase zeta complex consisting of four subunits: the catalytic subunit PolZ1 and three accessory subunits PolZ2/Rev7, PolD2/Pol31 and PolD3/Pol32. Expressed in ovaries (at the protein level). Expressed in ovaries.

It localises to the nucleus. Its subcellular location is the nucleoplasm. Functionally, accessory component of the DNA polymerase delta complex and possibly the DNA polymerase zeta complex. As a component of the delta complex, participates in high fidelity genome replication, including lagging strand synthesis, DNA recombination and repair. Required to recruit the DNA polymerase delta complex to the nucleus of rapidly dividing embryonic cells, and as a consequence is essential for genome replication during the earliest cell cycles. Increases the efficiency and processivity of DNA synthesis of the DNA polymerases during mitotic DNA replication and repair. During development this function is essential for preventing replication stress that results in the formation of chromosomal fragile sites (CFS) such as chromosomal breaks. Ensures genomic stability by promoting several types of DNA repair mechanisms including repairing broken dicentric chromosomes through homolog-dependent break-induced replication (BIR). During homologous recombination (HR) repair, required for maintaining the processivity of the delta complex during break-induced replication; a form of HR that requires extensive DNA synthesis such as the repair of large gaps. Able to suppress position effect variegation and may therefore have a role in the induction of chromatin state changes that likely include its activities in DNA replication and repair. The protein is DNA polymerase delta subunit 3 of Drosophila melanogaster (Fruit fly).